A 510-amino-acid chain; its full sequence is Ankyrin repeat domain-containing protein 13C-A (510 aa).

A compositionally biased stretch (basic and acidic residues) spans 1-19 (MTGEKIRSLHKDQKPSKDE). The disordered stretch occupies residues 1–35 (MTGEKIRSLHKDQKPSKDEDLLEPDEEATAGGTFT). ANK repeat units follow at residues 80–111 (DVYF…QKDS), 112–141 (HGNT…PVKV), and 145–174 (QGWS…QQSR).

The protein localises to the endoplasmic reticulum membrane. Acts as a molecular chaperone for G protein-coupled receptors, regulating their biogenesis and exit from the ER. This is Ankyrin repeat domain-containing protein 13C-A (ankrd13c-a) from Xenopus laevis (African clawed frog).